Reading from the N-terminus, the 251-residue chain is Hydroxyacylglutathione hydrolase (251 aa).

Zn(2+)-binding residues include H53, H55, D57, H58, H110, D127, and H165.

The protein belongs to the metallo-beta-lactamase superfamily. Glyoxalase II family. As to quaternary structure, monomer. The cofactor is Zn(2+).

It catalyses the reaction an S-(2-hydroxyacyl)glutathione + H2O = a 2-hydroxy carboxylate + glutathione + H(+). It functions in the pathway secondary metabolite metabolism; methylglyoxal degradation; (R)-lactate from methylglyoxal: step 2/2. Its function is as follows. Thiolesterase that catalyzes the hydrolysis of S-D-lactoyl-glutathione to form glutathione and D-lactic acid. In Escherichia coli (strain ATCC 8739 / DSM 1576 / NBRC 3972 / NCIMB 8545 / WDCM 00012 / Crooks), this protein is Hydroxyacylglutathione hydrolase.